The primary structure comprises 276 residues: Elongation factor Ts (276 aa).

The tract at residues 81-84 (TDFV) is involved in Mg(2+) ion dislocation from EF-Tu.

This sequence belongs to the EF-Ts family.

Its subcellular location is the cytoplasm. Associates with the EF-Tu.GDP complex and induces the exchange of GDP to GTP. It remains bound to the aminoacyl-tRNA.EF-Tu.GTP complex up to the GTP hydrolysis stage on the ribosome. This Leifsonia xyli subsp. xyli (strain CTCB07) protein is Elongation factor Ts.